Reading from the N-terminus, the 66-residue chain is MKAAEIRNYSDEELKKLLLEKKKQLMDMRFQHAMGQLRNTAQIKEVRRDIARIRTILRERELGIRR.

This sequence belongs to the universal ribosomal protein uL29 family.

The polypeptide is Large ribosomal subunit protein uL29 (Pseudothermotoga lettingae (strain ATCC BAA-301 / DSM 14385 / NBRC 107922 / TMO) (Thermotoga lettingae)).